A 257-amino-acid polypeptide reads, in one-letter code: UPF0246 protein Shew185_1115 (257 aa).

It belongs to the UPF0246 family.

The chain is UPF0246 protein Shew185_1115 from Shewanella baltica (strain OS185).